A 423-amino-acid chain; its full sequence is Anthranilate 1,2-dioxygenase large subunit (423 aa).

The region spanning tryptophan 53–alanine 168 is the Rieske domain. 4 residues coordinate [2Fe-2S] cluster: cysteine 95, histidine 97, cysteine 115, and histidine 118. Histidine 223, histidine 228, and aspartate 370 together coordinate Fe cation.

The protein belongs to the bacterial ring-hydroxylating dioxygenase alpha subunit family. In terms of assembly, part of a multicomponent enzyme system composed of a reductase (AndAa), a ferredoxin (AndAb) and a two-subunit oxygenase component (AndAc and AndAd). Fe cation serves as cofactor. Requires [2Fe-2S] cluster as cofactor.

The catalysed reaction is anthranilate + NADH + O2 + 3 H(+) = catechol + NH4(+) + CO2 + NAD(+). It catalyses the reaction anthranilate + NADPH + O2 + 3 H(+) = catechol + NH4(+) + CO2 + NADP(+). Its pathway is aromatic compound metabolism; anthranilate degradation via hydroxylation; catechol from anthranilate: step 1/1. In terms of biological role, oxygenase component of anthranilate dioxygenase multicomponent enzyme system which catalyzes the incorporation of both atoms of molecular oxygen into anthranilate to form catechol. Can also act on benzoate and salicylate but not on 2-chlorobenzoate or o-toluate. The polypeptide is Anthranilate 1,2-dioxygenase large subunit (Burkholderia cepacia (Pseudomonas cepacia)).